Consider the following 130-residue polypeptide: uncharacterized protein (130 aa).

The 55-residue stretch at 19-73 (IYSLRLAKGLSRQQLAEVIDVTHQQLQKYEKAINRISVGRLVLIAEALDRNIDYF) folds into the HTH cro/C1-type domain. A DNA-binding region (H-T-H motif) is located at residues 30–49 (RQQLAEVIDVTHQQLQKYEK).

This is an uncharacterized protein from Rickettsia prowazekii (strain Madrid E).